The sequence spans 1096 residues: Inactive phospholipase C-like protein 1 (1096 aa).

Positions 1–101 (MAEGAASREA…KKTVSFSSMP (101 aa)) are disordered. Low complexity predominate over residues 26–41 (GADAASGDAAPEASGG). A phosphoserine mark is found at Ser-48 and Ser-78. An interaction with PPP1C region spans residues 83-222 (PSNQKCGGRK…NIWVSGLRYL (140 aa)). At Thr-94 the chain carries Phosphothreonine. Position 96 is a phosphoserine (Ser-96). The region spanning 114–224 (SFMQAGCELK…WVSGLRYLVS (111 aa)) is the PH domain. Positions 399-543 (QDMTQPLSHY…LKHMIIVKGK (145 aa)) constitute a PI-PLC X-box domain. The tract at residues 544-568 (KLPSESDLLEGEVTDEDEEAEMSRR) is interaction with GABA A beta subunit. Position 557 is a phosphothreonine (Thr-557). Position 570 is a phosphoserine (Ser-570). A PI-PLC Y-box domain is found at 586-702 (LSDLVSICKS…GYVLRPSIMR (117 aa)). The C2 domain occupies 702–831 (RDEVSYFSAN…PGYRHVPLRS (130 aa)). Residues 1040-1060 (DLLKNAKNEAVENIKQIQLAC) are a coiled coil. The disordered stretch occupies residues 1067 to 1096 (KGPGSAAEAKGKRSLEAIEEKESSEENGKL). Basic and acidic residues predominate over residues 1075 to 1096 (AKGKRSLEAIEEKESSEENGKL). The residue at position 1080 (Ser-1080) is a Phosphoserine.

Belongs to the PRIP family. In terms of assembly, interacts with PPP2CA, GABA receptor beta subunits, GABA receptor gamma-2 subunits. Interacts with Ins(1,4,5)P3, Ins(1,4,5,6)P4, GABARAP, and PPP1C. May form a ternary complex with GABA receptor beta subunit and GABARAP. The formation of a ternary complex with GABA receptor beta subunit and GABARAP could be the key step for facilitating the association of GABARAP with the GABA receptor gamma-2 subunit and to allow it to be transported at the right destination. Phosphorylation of Thr-94 resulted in dissociation of PPP1C from PRIP1. In vitro, phosphorylated by the catalytic subunit of PKA. Expressed in brain. Found in the granular cell and Purkinje cell layers in the cerebellum; and in the hippocampal pyramidal cells, dentate granule cells and pyramidal granule cells of the cerebral cortex in the cerebrum.

Its subcellular location is the cytoplasm. Its function is as follows. Involved in an inositol phospholipid-based intracellular signaling cascade. Shows no PLC activity to phosphatidylinositol 4,5-bisphosphate and phosphatidylinositol. Component in the phospho-dependent endocytosis process of GABA A receptor. Acts as an inhibitor of PPP1C. This Rattus norvegicus (Rat) protein is Inactive phospholipase C-like protein 1 (Plcl1).